Reading from the N-terminus, the 175-residue chain is CEN-like protein 4 (175 aa).

This sequence belongs to the phosphatidylethanolamine-binding protein family. As to expression, expressed in vegetative axillary meristems but not in the main shoot meristem.

It localises to the cytoplasm. In terms of biological role, may form complexes with phosphorylated ligands by interfering with kinases and their effectors. This chain is CEN-like protein 4 (CET4), found in Nicotiana tabacum (Common tobacco).